The sequence spans 202 residues: Protein-methionine-sulfoxide reductase heme-binding subunit MsrQ (202 aa).

The next 5 membrane-spanning stretches (helical) occupy residues 8–28 (IVWLKVLLHLAGFLPLVWLFW), 82–102 (LWCFAWATLHLTSYTLLELGI), 116–136 (PYLTLGMISWAILLALAVTST), 149–169 (LLHNFVYLVAILAPIHYLWSV), and 171–191 (IVSPQPVVYALLAAGLLTWRY).

The protein belongs to the MsrQ family. In terms of assembly, heterodimer of a catalytic subunit (MsrP) and a heme-binding subunit (MsrQ). FMN is required as a cofactor. The cofactor is heme b.

The protein localises to the cell inner membrane. Part of the MsrPQ system that repairs oxidized periplasmic proteins containing methionine sulfoxide residues (Met-O), using respiratory chain electrons. Thus protects these proteins from oxidative-stress damage caused by reactive species of oxygen and chlorine generated by the host defense mechanisms. MsrPQ is essential for the maintenance of envelope integrity under bleach stress, rescuing a wide series of structurally unrelated periplasmic proteins from methionine oxidation. MsrQ provides electrons for reduction to the reductase catalytic subunit MsrP, using the quinone pool of the respiratory chain. This is Protein-methionine-sulfoxide reductase heme-binding subunit MsrQ from Klebsiella pneumoniae subsp. pneumoniae (strain ATCC 700721 / MGH 78578).